The primary structure comprises 241 residues: Large ribosomal subunit protein uL2 (241 aa).

Residues 201–241 (VDHPHGGGNRQHPGRPTTVSRHAPPGRKVGSIAAKRTGLKR) are disordered.

This sequence belongs to the universal ribosomal protein uL2 family. As to quaternary structure, part of the 50S ribosomal subunit. Forms a bridge to the 30S subunit in the 70S ribosome.

In terms of biological role, one of the primary rRNA binding proteins. Required for association of the 30S and 50S subunits to form the 70S ribosome, for tRNA binding and peptide bond formation. It has been suggested to have peptidyltransferase activity; this is somewhat controversial. Makes several contacts with the 16S rRNA in the 70S ribosome. This is Large ribosomal subunit protein uL2 from Methanobrevibacter smithii (strain ATCC 35061 / DSM 861 / OCM 144 / PS).